The sequence spans 547 residues: Glucose-6-phosphate isomerase (547 aa).

The active-site Proton donor is the Glu-351. Residues His-382 and Lys-509 contribute to the active site.

Belongs to the GPI family.

The protein localises to the cytoplasm. It catalyses the reaction alpha-D-glucose 6-phosphate = beta-D-fructose 6-phosphate. The protein operates within carbohydrate biosynthesis; gluconeogenesis. It functions in the pathway carbohydrate degradation; glycolysis; D-glyceraldehyde 3-phosphate and glycerone phosphate from D-glucose: step 2/4. Functionally, catalyzes the reversible isomerization of glucose-6-phosphate to fructose-6-phosphate. The sequence is that of Glucose-6-phosphate isomerase from Coxiella burnetii (strain Dugway 5J108-111).